The sequence spans 449 residues: Signal recognition particle protein (449 aa).

Residues 109-116 (GLQGGGKT), 191-195 (DTAGR), and 249-252 (SRID) each bind GTP.

This sequence belongs to the GTP-binding SRP family. SRP54 subfamily. As to quaternary structure, part of the signal recognition particle protein translocation system, which is composed of SRP and FtsY. SRP is a ribonucleoprotein composed of Ffh and a 4.5S RNA molecule.

It localises to the cytoplasm. The catalysed reaction is GTP + H2O = GDP + phosphate + H(+). Its function is as follows. Involved in targeting and insertion of nascent membrane proteins into the cytoplasmic membrane. Binds to the hydrophobic signal sequence of the ribosome-nascent chain (RNC) as it emerges from the ribosomes. The SRP-RNC complex is then targeted to the cytoplasmic membrane where it interacts with the SRP receptor FtsY. Interaction with FtsY leads to the transfer of the RNC complex to the Sec translocase for insertion into the membrane, the hydrolysis of GTP by both Ffh and FtsY, and the dissociation of the SRP-FtsY complex into the individual components. The polypeptide is Signal recognition particle protein (Rickettsia prowazekii (strain Madrid E)).